A 607-amino-acid chain; its full sequence is Matrix metalloproteinase-16 (607 aa).

The N-terminal stretch at 1-31 is a signal peptide; sequence MILLAFSSGRRLDFVHRSGVFFLQTLLWILC. Residues 32–119 constitute a propeptide that is removed on maturation; sequence ATVCGTEQYF…SSKFNIRRKR (88 aa). A glycan (N-linked (GlcNAc...) asparagine) is linked at asparagine 83. The Cysteine switch motif lies at 99-106; it reads PRCGVPDQ. Cysteine 101 contributes to the Zn(2+) binding site. Over 120-564 the chain is Extracellular; sequence YALTGQKWQH…LDNTASTVKA (445 aa). Residue aspartate 183 coordinates Ca(2+). Residues histidine 193 and aspartate 195 each coordinate Zn(2+). Aspartate 200, glycine 201, glycine 203, and phenylalanine 205 together coordinate Ca(2+). A Zn(2+)-binding site is contributed by histidine 208. Ca(2+) is bound by residues glycine 215, glycine 217, and aspartate 219. Residue histidine 221 participates in Zn(2+) binding. Residues aspartate 223 and glutamate 226 each coordinate Ca(2+). Position 246 (histidine 246) interacts with Zn(2+). The active site involves glutamate 247. Histidine 250 and histidine 256 together coordinate Zn(2+). The tract at residues 281 to 340 is disordered; sequence DDLQGIQKIYGPPDKIPPPTRPLPTVPPHRSVPPADPRRHDRPKPPRPPTGRPSYPGAKP. The segment covering 294 to 315 has biased composition (pro residues); sequence DKIPPPTRPLPTVPPHRSVPPA. Hemopexin repeat units follow at residues 340-388, 389-434, 436-484, and 485-532; these read PNIC…WRGL, PPSI…GNGI, PHGI…KGIP, and ESPQ…FMGC. The cysteines at positions 343 and 532 are disulfide-linked. A helical transmembrane segment spans residues 565 to 585; the sequence is IAIVIPCILALCLLVLVYTVF. The Cytoplasmic portion of the chain corresponds to 586–607; sequence QFKRKGTPRHILYCKRSMQEWV.

This sequence belongs to the peptidase M10A family. Interacts with CSPG4 through CSPG4 chondroitin sulfate glycosaminoglycan. It depends on Zn(2+) as a cofactor. Ca(2+) is required as a cofactor. In terms of processing, the precursor is cleaved by a furin endopeptidase.

The protein resides in the cell membrane. In terms of biological role, endopeptidase that degrades various components of the extracellular matrix, such as collagen type III and fibronectin. Activates progelatinase A. Involved in the matrix remodeling of blood vessels. It has no effect on type I, II, IV and V collagen. However, upon interaction with CSPG4, it may be involved in degradation and invasion of type I collagen by melanoma cells. This chain is Matrix metalloproteinase-16 (Mmp16), found in Mus musculus (Mouse).